Consider the following 332-residue polypeptide: F-box/SPRY domain-containing protein 1 (332 aa).

A disordered region spans residues Met1–Ala82. Composition is skewed to polar residues over residues Cys15–Leu28 and Asn49–Pro64. Residues Glu79–Leu127 form the F-box domain. A B30.2/SPRY domain is found at Ser138–Gln330.

Belongs to the FBXO45/Fsn family. Component of an SCF (SKP1-CUL1-F-box protein) E3 ubiquitin ligase complex composed of cul-1, fsn-1, rpm-1 and skr-1. Interacts (via SPRY domain) with scd-2 (via cytoplasmic domain). Interacts (via SPRY domain) with convertase egl-3 (via C-terminus). As to expression, expressed in GABAergic neuromuscular junctions (NMJs).

It localises to the synapse. It functions in the pathway protein modification; protein ubiquitination. In terms of biological role, component of a SCF (SKP1-CUL1-F-box protein) E3 ubiquitin ligase complex which is required for the restriction and/or maturation of synapses in GABAergic neuromuscular junction (NMJ) presynaptic neurons. Promotes NRJ synapse development and synaptic transmission by negatively regulating the daf-2/InsR pathway in muscles. By targeting convertase egl-3 for degradation, negatively modulates insulin-like protein ins-4 and ins-6 processing. May stabilize synapse formation by promoting the down-regulation of scd-2. Regulates axon termination in PLM and ALM neurons. The protein is F-box/SPRY domain-containing protein 1 (fsn-1) of Caenorhabditis elegans.